Reading from the N-terminus, the 136-residue chain is MPAPVVLILAAGRGECFLASGGNTHKCIGWRQSPEVAPYRWPFEENGRTFDLAIEPQITTNDLRLMLRLALAGGGITIATQETFRPYIESGKLVSLLDDFLPQFPGFYLYFPQRRNIAPKLRALIDYVKEWRQQLA.

It belongs to the LysR transcriptional regulatory family.

The protein is Putative LysR family substrate binding domain-containing protein YagP (yagP) of Escherichia coli (strain K12).